The following is a 257-amino-acid chain: tRNA pseudouridine synthase A (257 aa).

The active-site Nucleophile is the Asp52. Residue Tyr111 coordinates substrate.

This sequence belongs to the tRNA pseudouridine synthase TruA family. In terms of assembly, homodimer.

It carries out the reaction uridine(38/39/40) in tRNA = pseudouridine(38/39/40) in tRNA. Its function is as follows. Formation of pseudouridine at positions 38, 39 and 40 in the anticodon stem and loop of transfer RNAs. In Cereibacter sphaeroides (strain ATCC 17025 / ATH 2.4.3) (Rhodobacter sphaeroides), this protein is tRNA pseudouridine synthase A.